Here is a 479-residue protein sequence, read N- to C-terminus: Ribulose bisphosphate carboxylase large chain (479 aa).

Residues 1 to 2 constitute a propeptide that is removed on maturation; that stretch reads MS. An N-acetylproline modification is found at P3. Residues T65, N123, 173 to 177, and 201 to 204 contribute to the substrate site; these read TIKPK and KDDE. K175 serves as the catalytic Proton acceptor. Mg(2+)-binding residues include K201, D203, and E204. K201 is modified (N6-carboxylysine). S208 is modified (phosphoserine). Catalysis depends on H294, which acts as the Proton acceptor. Substrate contacts are provided by residues 294 to 295 and H327; that span reads HR. T330 bears the Phosphothreonine mark. Substrate is bound by residues K334 and 379-381; that span reads SGG.

This sequence belongs to the RuBisCO large chain family. Type I subfamily. Heterohexadecamer of 8 large chains and 8 small chains; disulfide-linked. The disulfide link is formed within the large subunit homodimers. Interacts with RBCX1 and RBCX1. An intermediate complex made of eight RbcL subunits interacts with the chaperone BSD2. Requires Mg(2+) as cofactor. Post-translationally, the disulfide bond which can form in the large chain dimeric partners within the hexadecamer appears to be associated with oxidative stress and protein turnover.

The protein localises to the plastid. It localises to the chloroplast. The catalysed reaction is 2 (2R)-3-phosphoglycerate + 2 H(+) = D-ribulose 1,5-bisphosphate + CO2 + H2O. It catalyses the reaction D-ribulose 1,5-bisphosphate + O2 = 2-phosphoglycolate + (2R)-3-phosphoglycerate + 2 H(+). In terms of biological role, ruBisCO catalyzes two reactions: the carboxylation of D-ribulose 1,5-bisphosphate, the primary event in carbon dioxide fixation, as well as the oxidative fragmentation of the pentose substrate in the photorespiration process. Both reactions occur simultaneously and in competition at the same active site. Binds to abscisic acid (ABA). The chain is Ribulose bisphosphate carboxylase large chain from Arabidopsis thaliana (Mouse-ear cress).